The chain runs to 84 residues: Putative membrane protein insertion efficiency factor (84 aa).

Residues Trp-60 to His-84 are disordered. Over residues Val-68–His-84 the composition is skewed to basic and acidic residues.

It belongs to the UPF0161 family.

It localises to the cell membrane. In terms of biological role, could be involved in insertion of integral membrane proteins into the membrane. In Streptococcus gordonii (strain Challis / ATCC 35105 / BCRC 15272 / CH1 / DL1 / V288), this protein is Putative membrane protein insertion efficiency factor.